A 199-amino-acid chain; its full sequence is Dephospho-CoA kinase (199 aa).

The 197-residue stretch at K3–Q199 folds into the DPCK domain. C11–T16 serves as a coordination point for ATP.

The protein belongs to the CoaE family.

The protein localises to the cytoplasm. The catalysed reaction is 3'-dephospho-CoA + ATP = ADP + CoA + H(+). Its pathway is cofactor biosynthesis; coenzyme A biosynthesis; CoA from (R)-pantothenate: step 5/5. In terms of biological role, catalyzes the phosphorylation of the 3'-hydroxyl group of dephosphocoenzyme A to form coenzyme A. The polypeptide is Dephospho-CoA kinase (Clostridium perfringens (strain 13 / Type A)).